Reading from the N-terminus, the 145-residue chain is Nucleoside diphosphate kinase (145 aa).

The ATP site is built by lysine 11, phenylalanine 59, arginine 87, threonine 93, arginine 104, and asparagine 114. Histidine 117 serves as the catalytic Pros-phosphohistidine intermediate.

It belongs to the NDK family. Mg(2+) is required as a cofactor.

The protein resides in the cytoplasm. It carries out the reaction a 2'-deoxyribonucleoside 5'-diphosphate + ATP = a 2'-deoxyribonucleoside 5'-triphosphate + ADP. It catalyses the reaction a ribonucleoside 5'-diphosphate + ATP = a ribonucleoside 5'-triphosphate + ADP. Functionally, major role in the synthesis of nucleoside triphosphates other than ATP. The ATP gamma phosphate is transferred to the NDP beta phosphate via a ping-pong mechanism, using a phosphorylated active-site intermediate. In Sulfolobus acidocaldarius (strain ATCC 33909 / DSM 639 / JCM 8929 / NBRC 15157 / NCIMB 11770), this protein is Nucleoside diphosphate kinase.